The chain runs to 224 residues: LexA repressor (224 aa).

Positions 38-58 (IREIGDAVGLTSTSSVAHQLR) form a DNA-binding region, H-T-H motif. Residues 71–82 (NRPRAVDVRGID) are compositionally biased toward basic and acidic residues. Residues 71–96 (NRPRAVDVRGIDDAGTPSATTDVIGS) are disordered. Catalysis depends on for autocatalytic cleavage activity residues S148 and K185.

The protein belongs to the peptidase S24 family. Homodimer.

The catalysed reaction is Hydrolysis of Ala-|-Gly bond in repressor LexA.. In terms of biological role, represses a number of genes involved in the response to DNA damage (SOS response), including recA and lexA. In the presence of single-stranded DNA, RecA interacts with LexA causing an autocatalytic cleavage which disrupts the DNA-binding part of LexA, leading to derepression of the SOS regulon and eventually DNA repair. The protein is LexA repressor of Mycobacteroides abscessus (strain ATCC 19977 / DSM 44196 / CCUG 20993 / CIP 104536 / JCM 13569 / NCTC 13031 / TMC 1543 / L948) (Mycobacterium abscessus).